Consider the following 443-residue polypeptide: Phosphoglucosamine mutase (443 aa).

Serine 101 acts as the Phosphoserine intermediate in catalysis. Mg(2+) contacts are provided by serine 101, aspartate 239, aspartate 241, and aspartate 243. Serine 101 carries the post-translational modification Phosphoserine.

It belongs to the phosphohexose mutase family. Mg(2+) serves as cofactor. Activated by phosphorylation.

It catalyses the reaction alpha-D-glucosamine 1-phosphate = D-glucosamine 6-phosphate. In terms of biological role, catalyzes the conversion of glucosamine-6-phosphate to glucosamine-1-phosphate. The sequence is that of Phosphoglucosamine mutase from Francisella philomiragia subsp. philomiragia (strain ATCC 25017 / CCUG 19701 / FSC 153 / O#319-036).